The chain runs to 238 residues: Uridylate kinase (238 aa).

An ATP-binding site is contributed by 12–15; it reads KLSG. Residue Gly54 coordinates UMP. ATP is bound by residues Gly55 and Arg59. Residues Asp74 and 135–142 each bind UMP; that span reads TGNPYFST. Positions 168 and 171 each coordinate ATP.

The protein belongs to the UMP kinase family. As to quaternary structure, homohexamer.

Its subcellular location is the cytoplasm. It carries out the reaction UMP + ATP = UDP + ADP. Its pathway is pyrimidine metabolism; CTP biosynthesis via de novo pathway; UDP from UMP (UMPK route): step 1/1. With respect to regulation, inhibited by UTP. Its function is as follows. Catalyzes the reversible phosphorylation of UMP to UDP. In Syntrophomonas wolfei subsp. wolfei (strain DSM 2245B / Goettingen), this protein is Uridylate kinase.